We begin with the raw amino-acid sequence, 569 residues long: Glucose-6-phosphate isomerase, cytosolic 1A (569 aa).

Glu360 serves as the catalytic Proton donor. Active-site residues include His391 and Lys516.

This sequence belongs to the GPI family. As to quaternary structure, homodimer.

It is found in the cytoplasm. It catalyses the reaction alpha-D-glucose 6-phosphate = beta-D-fructose 6-phosphate. Its pathway is carbohydrate degradation; glycolysis; D-glyceraldehyde 3-phosphate and glycerone phosphate from D-glucose: step 2/4. The protein is Glucose-6-phosphate isomerase, cytosolic 1A (PGIC1-A) of Clarkia lewisii (Farewell-to-spring).